Consider the following 616-residue polypeptide: GPI mannosyltransferase 3 (616 aa).

The Cytoplasmic portion of the chain corresponds to 1 to 16 (MAHEVHRIKPKLGRTQ). Residues 17 to 37 (IFWVFLAFRVLNAVLTRTFFQ) form a helical membrane-spanning segment. Over 38–86 (ADEFWQALEPAHWKAFKYGELTWEWKFGVRSYLFPMIFELTYRLVSLSS) the chain is Lumenal. The helical transmembrane segment at 87–107 (ILLHYALLLLSTIGSDLLILL) threads the bilayer. The Cytoplasmic portion of the chain corresponds to 108-136 (LPKYELSWQVAEDLKRLPFDVTRSFEYYG). The chain crosses the membrane as a helical span at residues 137–157 (VIYAPKIVMAVLASIGEYYIV). At 158 to 188 (RFVQKLYLLTLDKRNEKEEEERRSGLSEITK) the chain is on the lumenal side. The chain crosses the membrane as a helical span at residues 189-209 (FALLLSLTNFFNCFFITRTFI). Over 210 to 240 (NSFEMILTSIALYYWDWTGGQMIKESSFTKS) the chain is Cytoplasmic. The helical transmembrane segment at 241–261 (LIFAFLACLQRPSSGLIWVIP) threads the bilayer. The Lumenal segment spans residues 262–278 (SISLILNLVGKKQYHLL). The helical transmembrane segment at 279–299 (FITFSKVLRSFFLVFTANAII) threads the bilayer. The Cytoplasmic portion of the chain corresponds to 300–338 (DMYFYEKVTFPFFRFLKFNFTTPLSKFYGVAPWHFHFFQ). Residues 339-359 (SLPIVLGASIPAFAFGLFFPL) form a helical membrane-spanning segment. Over 360–392 (SKRSFPKKYLNPFFQVKLTILLNLLVYSTLPHK) the chain is Lumenal. Residues 393–413 (EFRFIFPLQPLFILISSFGLL) form a helical membrane-spanning segment. At 414 to 423 (RLDRDYWKRL) the chain is on the cytoplasmic side. A helical transmembrane segment spans residues 424–444 (SGLKSLLWLVPFVSVFIALLL). Over 445–616 (DTFHESGSIE…DYSDIPAADI (172 aa)) the chain is Lumenal.

This sequence belongs to the glycosyltransferase 22 family. PIGB subfamily.

The protein resides in the endoplasmic reticulum membrane. It functions in the pathway glycolipid biosynthesis; glycosylphosphatidylinositol-anchor biosynthesis. Its function is as follows. Mannosyltransferase involved in glycosylphosphatidylinositol-anchor biosynthesis. Transfers the third mannose to Man2-GlcN-acyl-PI during GPI precursor assembly. The polypeptide is GPI mannosyltransferase 3 (GPI10) (Saccharomyces cerevisiae (strain ATCC 204508 / S288c) (Baker's yeast)).